Reading from the N-terminus, the 509-residue chain is Cytochrome P450 monooxygenase alt3 (509 aa).

Residues isoleucine 25–leucine 45 traverse the membrane as a helical segment. Position 450 (cysteine 450) interacts with heme.

It belongs to the cytochrome P450 family. The cofactor is heme.

The protein localises to the membrane. It participates in secondary metabolite biosynthesis. Cytochrome P450 monooxygenase; part of the gene cluster that mediates the biosynthesis of alternapyrone derivatives. Alternapyrone is a decaketide with octa-methylation from methionine on every C2 unit except the third unit. All the domains in the polyketide synthase alt5 are apparently involved in alternapyrone synthesis, that is, the 8 CMeT, 7 KR, 7 DH, and 4 ER reactions in the 9 KS-mediated condensation steps required for alternapyrone synthesis. the alternapyrone produced by alt5 might be intensively modified by cytochrome P450 monooxygenases alt1, alt2 and alt3 and FAD-dependent oxidoreductase alt4 present in the alt gene cluster. The chain is Cytochrome P450 monooxygenase alt3 from Alternaria solani.